The following is a 213-amino-acid chain: Nicotinate-nucleotide adenylyltransferase (213 aa).

Belongs to the NadD family.

It catalyses the reaction nicotinate beta-D-ribonucleotide + ATP + H(+) = deamido-NAD(+) + diphosphate. It functions in the pathway cofactor biosynthesis; NAD(+) biosynthesis; deamido-NAD(+) from nicotinate D-ribonucleotide: step 1/1. Catalyzes the reversible adenylation of nicotinate mononucleotide (NaMN) to nicotinic acid adenine dinucleotide (NaAD). This is Nicotinate-nucleotide adenylyltransferase from Salmonella typhi.